The primary structure comprises 665 residues: Protein Fe65 homolog (665 aa).

A compositionally biased stretch (basic and acidic residues) spans 1 to 12 (MREGTPRVRIEV). Disordered stretches follow at residues 1 to 43 (MREG…DTAT) and 90 to 111 (SRGYSSAGRGQKGRREEERRRN). Residues 14–24 (KGSNRPSQFVS) show a composition bias toward polar residues. Composition is skewed to basic and acidic residues over residues 27 to 40 (EEQRLQRVQSRDSD) and 102 to 111 (GRREEERRRN). In terms of domain architecture, WW spans 233-266 (KDLPPGWEKHEDPQGYSYYWHVDSGTIQRQPPPP). PID domains are found at residues 330–456 (VRFA…RDIC) and 499–615 (FLGV…VLDA).

Interacts (via PID 2 domain) with apl-1 (via cytoplasmic domain). In terms of processing, phosphorylated. Expressed in the pharynx (including pharyngeal muscle and nerve cells), ventral nerve cord and tail neurons.

It localises to the cytoplasm. The protein resides in the cytoskeleton. Modulates pharyngeal pumping activity, at least in part by regulating expression of the acetylcholinesterase genes ace-1 and ace-2. The polypeptide is Protein Fe65 homolog (Caenorhabditis elegans).